Consider the following 73-residue polypeptide: Putative membrane protein insertion efficiency factor (73 aa).

Belongs to the UPF0161 family.

Its subcellular location is the cell inner membrane. In terms of biological role, could be involved in insertion of integral membrane proteins into the membrane. In Neisseria gonorrhoeae (strain ATCC 700825 / FA 1090), this protein is Putative membrane protein insertion efficiency factor.